Here is a 430-residue protein sequence, read N- to C-terminus: Trigger factor (430 aa).

One can recognise a PPIase FKBP-type domain in the interval 165–250 (TDIAIFDFEG…LHQIKTKKIP (86 aa)).

Belongs to the FKBP-type PPIase family. Tig subfamily.

Its subcellular location is the cytoplasm. The catalysed reaction is [protein]-peptidylproline (omega=180) = [protein]-peptidylproline (omega=0). Functionally, involved in protein export. Acts as a chaperone by maintaining the newly synthesized protein in an open conformation. Functions as a peptidyl-prolyl cis-trans isomerase. The chain is Trigger factor from Onion yellows phytoplasma (strain OY-M).